The chain runs to 203 residues: Elongation factor Ts (203 aa).

The segment at 80-83 is involved in Mg(2+) ion dislocation from EF-Tu; the sequence is TDFV.

It belongs to the EF-Ts family.

Its subcellular location is the cytoplasm. Associates with the EF-Tu.GDP complex and induces the exchange of GDP to GTP. It remains bound to the aminoacyl-tRNA.EF-Tu.GTP complex up to the GTP hydrolysis stage on the ribosome. In Moorella thermoacetica (strain ATCC 39073 / JCM 9320), this protein is Elongation factor Ts.